The sequence spans 94 residues: Co-chaperonin GroES (94 aa).

This sequence belongs to the GroES chaperonin family. Heptamer of 7 subunits arranged in a ring. Interacts with the chaperonin GroEL.

It localises to the cytoplasm. In terms of biological role, together with the chaperonin GroEL, plays an essential role in assisting protein folding. The GroEL-GroES system forms a nano-cage that allows encapsulation of the non-native substrate proteins and provides a physical environment optimized to promote and accelerate protein folding. GroES binds to the apical surface of the GroEL ring, thereby capping the opening of the GroEL channel. This chain is Co-chaperonin GroES, found in Caldanaerobacter subterraneus subsp. tengcongensis (strain DSM 15242 / JCM 11007 / NBRC 100824 / MB4) (Thermoanaerobacter tengcongensis).